A 131-amino-acid chain; its full sequence is Small ribosomal subunit protein eS24 (131 aa).

Position 1 is an N-acetylmethionine (M1). T9 is subject to Phosphothreonine. K37 is covalently cross-linked (Glycyl lysine isopeptide (Lys-Gly) (interchain with G-Cter in SUMO2)). The span at 90–100 (RLARHGLYEKK) shows a compositional bias: basic and acidic residues. The interval 90-131 (RLARHGLYEKKKTSRKQRKERKNRMKKVRGTAKANVGAGKKK) is disordered. A compositionally biased stretch (basic residues) spans 101–119 (KTSRKQRKERKNRMKKVRG).

It belongs to the eukaryotic ribosomal protein eS24 family. In terms of assembly, component of the small ribosomal subunit. Part of the small subunit (SSU) processome, composed of more than 70 proteins and the RNA chaperone small nucleolar RNA (snoRNA) U3.

The protein localises to the cytoplasm. It localises to the nucleus. It is found in the nucleolus. Component of the small ribosomal subunit. The ribosome is a large ribonucleoprotein complex responsible for the synthesis of proteins in the cell. Required for processing of pre-rRNA and maturation of 40S ribosomal subunits. Part of the small subunit (SSU) processome, first precursor of the small eukaryotic ribosomal subunit. During the assembly of the SSU processome in the nucleolus, many ribosome biogenesis factors, an RNA chaperone and ribosomal proteins associate with the nascent pre-rRNA and work in concert to generate RNA folding, modifications, rearrangements and cleavage as well as targeted degradation of pre-ribosomal RNA by the RNA exosome. The chain is Small ribosomal subunit protein eS24 (RPS24) from Pongo abelii (Sumatran orangutan).